The following is a 99-amino-acid chain: Beta-2-microglobulin (99 aa).

One can recognise an Ig-like C1-type domain in the interval 5-93 (PRVQVYSRHP…HITLSEPKIV (89 aa)). Cys25 and Cys80 are joined by a disulfide.

Belongs to the beta-2-microglobulin family. As to quaternary structure, heterodimer of an alpha chain and a beta chain. Beta-2-microglobulin is the beta-chain of major histocompatibility complex class I molecules.

It localises to the secreted. Component of the class I major histocompatibility complex (MHC). Involved in the presentation of peptide antigens to the immune system. The sequence is that of Beta-2-microglobulin (B2M) from Cavia porcellus (Guinea pig).